The chain runs to 306 residues: Replication termination factor 2 (306 aa).

Residues 192–306 (RAKLEKKTKK…HWVTHTSYCF (115 aa)) form a disordered region. Positions 226-240 (GKSEEADPDPREKKS) are enriched in basic and acidic residues. Residue Ser287 is modified to Phosphoserine.

The protein belongs to the rtf2 family. In terms of assembly, interacts with DDI2; probably also interacts with DDI1. In terms of processing, undergoes proteasomal degradation, via DDI1 and DDI2. Removal from stalled replisomes and degradation are required for genome stability.

The protein localises to the chromosome. Its function is as follows. Replication termination factor which is a component of the elongating replisome. Required for ATR pathway signaling upon DNA damage and has a positive activity during DNA replication. Might function to facilitate fork pausing at replication fork barriers like the rDNA. May be globally required to stimulate ATR signaling after the fork stalls or encounters a lesion. Interacts with nascent DNA. The polypeptide is Replication termination factor 2 (Rattus norvegicus (Rat)).